The primary structure comprises 102 residues: Small ribosomal subunit protein uS10 (102 aa).

Belongs to the universal ribosomal protein uS10 family. As to quaternary structure, part of the 30S ribosomal subunit.

Its function is as follows. Involved in the binding of tRNA to the ribosomes. This is Small ribosomal subunit protein uS10 from Clostridium acetobutylicum (strain ATCC 824 / DSM 792 / JCM 1419 / IAM 19013 / LMG 5710 / NBRC 13948 / NRRL B-527 / VKM B-1787 / 2291 / W).